The chain runs to 134 residues: Small ribosomal subunit protein uS11 (134 aa).

The protein belongs to the universal ribosomal protein uS11 family. Part of the 30S ribosomal subunit. Interacts with proteins S7 and S18. Binds to IF-3.

In terms of biological role, located on the platform of the 30S subunit, it bridges several disparate RNA helices of the 16S rRNA. Forms part of the Shine-Dalgarno cleft in the 70S ribosome. The polypeptide is Small ribosomal subunit protein uS11 (Herminiimonas arsenicoxydans).